A 242-amino-acid polypeptide reads, in one-letter code: Ribonuclease PH (242 aa).

Phosphate is bound by residues Arg86 and 124-126 (GTR).

The protein belongs to the RNase PH family. As to quaternary structure, homohexameric ring arranged as a trimer of dimers.

The enzyme catalyses tRNA(n+1) + phosphate = tRNA(n) + a ribonucleoside 5'-diphosphate. Functionally, phosphorolytic 3'-5' exoribonuclease that plays an important role in tRNA 3'-end maturation. Removes nucleotide residues following the 3'-CCA terminus of tRNAs; can also add nucleotides to the ends of RNA molecules by using nucleoside diphosphates as substrates, but this may not be physiologically important. Probably plays a role in initiation of 16S rRNA degradation (leading to ribosome degradation) during starvation. The protein is Ribonuclease PH of Photorhabdus laumondii subsp. laumondii (strain DSM 15139 / CIP 105565 / TT01) (Photorhabdus luminescens subsp. laumondii).